The primary structure comprises 325 residues: MATERKPILLEFEKPLAELEAQINQVRQKSAELGVDVSDQIRELENNSTQLRQEIFSKLTPSQKLQLARHPRRPSTLDYIQAISDEWMELHGDRYGSDDPAIVAGVARLAGQPVVMLGQQKGRDTKDNVARNFGMASPSGYRKAIRIMEHADRFGMPILTFIDTPAAWAGIEAEQYGQGEAIAYNLREMFRLEVPIICTVIGEGGSGGALGIGVGDRLLMFEHAIYSVAPPEACAAILWRDAQKAPLAAEALKITAADLQKLGLIDEILPEPLGGAHVDPVGATEILKTSLIAHLRQLSQMSSPQRRELRYQKFRRMGIFTQSAA.

Residues 43 to 297 (ELENNSTQLR…KTSLIAHLRQ (255 aa)) form the CoA carboxyltransferase C-terminal domain.

Belongs to the AccA family. As to quaternary structure, acetyl-CoA carboxylase is a heterohexamer composed of biotin carboxyl carrier protein (AccB), biotin carboxylase (AccC) and two subunits each of ACCase subunit alpha (AccA) and ACCase subunit beta (AccD).

The protein resides in the cytoplasm. The enzyme catalyses N(6)-carboxybiotinyl-L-lysyl-[protein] + acetyl-CoA = N(6)-biotinyl-L-lysyl-[protein] + malonyl-CoA. Its pathway is lipid metabolism; malonyl-CoA biosynthesis; malonyl-CoA from acetyl-CoA: step 1/1. Component of the acetyl coenzyme A carboxylase (ACC) complex. First, biotin carboxylase catalyzes the carboxylation of biotin on its carrier protein (BCCP) and then the CO(2) group is transferred by the carboxyltransferase to acetyl-CoA to form malonyl-CoA. The polypeptide is Acetyl-coenzyme A carboxylase carboxyl transferase subunit alpha (Cyanothece sp. (strain PCC 7425 / ATCC 29141)).